A 968-amino-acid chain; its full sequence is Insulin receptor substrate 1 (968 aa).

Residues 8 to 109 (GMALSGYLKK…WLDKLLVLQR (102 aa)) form the PH domain. In terms of domain architecture, IRS-type PTB spans 122–236 (YDHVWQVVIQ…SAMSAKTESN (115 aa)). The disordered stretch occupies residues 248-269 (DLSHEPMRKRSSSANEASKPIN). A phosphoserine mark is found at S286 and S287. The segment covering 304 to 329 (RNGTLSESSNQTYFGSNHGLRSNTIS) has biased composition (polar residues). Residues 304-370 (RNGTLSESSN…VDESDDNGSF (67 aa)) form a disordered region. S342 carries the post-translational modification Phosphoserine. A Phosphotyrosine; by INSR modification is found at Y411. A YXXM motif 1 motif is present at residues 411–414 (YIPM). The disordered stretch occupies residues 528 to 555 (TANRSQSSITKEGTSYGSSANRQKKSTS). Residues 529–555 (ANRSQSSITKEGTSYGSSANRQKKSTS) are compositionally biased toward polar residues. The residue at position 555 (S555) is a Phosphoserine. The YXXM motif 2 motif lies at 641-644 (YLEM). The segment covering 697-711 (EKWREQPSRSEEKKS) has biased composition (basic and acidic residues). The segment at 697–739 (EKWREQPSRSEEKKSNSPLNDNTFSSKPTNVESTSKSHDVHSA) is disordered. Over residues 712–730 (NSPLNDNTFSSKPTNVEST) the composition is skewed to polar residues. Y911 carries the phosphotyrosine; by INSR modification. A disordered region spans residues 922–968 (QNPAKYLKRGSRESPPVSACPEDGNTYAKIDFDQSDSSSSSSNIFNT). Phosphoserine is present on residues S932 and S935. Y948 is subject to Phosphotyrosine; by INSR. Over residues 956–968 (SDSSSSSSNIFNT) the composition is skewed to low complexity.

As to quaternary structure, bindings to phosphatidylinositol 3-kinase and SHP2.

In terms of biological role, activates phosphatidylinositol 3-kinase when bound to the regulatory p85 subunit. May mediate the control of various cellular processes by insulin-like peptides. When phosphorylated by the insulin receptor binds specifically to various cellular proteins containing SH2 domains. Involved in control of cell proliferation, cell size, and body and organ growth throughout development. Also has a role in a signaling pathway controlling the physiological response required to endure periods of low nutrient conditions. Insulin/insulin-like growth factor (IGF) signaling pathway has a role in regulating aging and is necessary in the ovary for vitellogenic maturation. The chain is Insulin receptor substrate 1 (chico) from Drosophila melanogaster (Fruit fly).